A 105-amino-acid chain; its full sequence is Putative membrane protein insertion efficiency factor (105 aa).

The protein belongs to the UPF0161 family.

It localises to the cell inner membrane. Functionally, could be involved in insertion of integral membrane proteins into the membrane. The chain is Putative membrane protein insertion efficiency factor from Nitratidesulfovibrio vulgaris (strain DSM 19637 / Miyazaki F) (Desulfovibrio vulgaris).